A 468-amino-acid chain; its full sequence is DNA polymerase IV 1 (468 aa).

A UmuC domain is found at 6–188 (VLHLDMDAFF…LPVRRLWGIG (183 aa)). Residues Asp10 and Asp105 each contribute to the Mg(2+) site. Residue Glu106 is part of the active site.

It belongs to the DNA polymerase type-Y family. Monomer. Mg(2+) is required as a cofactor.

It is found in the cytoplasm. The enzyme catalyses DNA(n) + a 2'-deoxyribonucleoside 5'-triphosphate = DNA(n+1) + diphosphate. Poorly processive, error-prone DNA polymerase involved in untargeted mutagenesis. Copies undamaged DNA at stalled replication forks, which arise in vivo from mismatched or misaligned primer ends. These misaligned primers can be extended by PolIV. Exhibits no 3'-5' exonuclease (proofreading) activity. May be involved in translesional synthesis, in conjunction with the beta clamp from PolIII. This chain is DNA polymerase IV 1 (dinB1), found in Mycobacterium tuberculosis (strain CDC 1551 / Oshkosh).